The following is a 132-amino-acid chain: Small ribosomal subunit protein uS8 (132 aa).

It belongs to the universal ribosomal protein uS8 family. As to quaternary structure, part of the 30S ribosomal subunit. Contacts proteins S5 and S12.

In terms of biological role, one of the primary rRNA binding proteins, it binds directly to 16S rRNA central domain where it helps coordinate assembly of the platform of the 30S subunit. In Aliarcobacter butzleri (strain RM4018) (Arcobacter butzleri), this protein is Small ribosomal subunit protein uS8.